A 154-amino-acid chain; its full sequence is MVKAVAVIRGDSKVSGTVTFEQANENTPTTISWNITGHDANAERGFHVHQFGDNTNGCTSAGPHFNPYGKTHGAPEDDERHVGDLGNFKTDAEGNAVGSKQDKLVKLIGAESVLGRTLVVHAGTDDLGRGGNEESKKTGNAGPRPACGVIGIAA.

The Cu cation site is built by His-47, His-49, and His-64. An intrachain disulfide couples Cys-58 to Cys-147. His-64, His-72, His-81, and Asp-84 together coordinate Zn(2+). His-121 contributes to the Cu cation binding site. Residues 125-137 (DDLGRGGNEESKK) are compositionally biased toward basic and acidic residues. A disordered region spans residues 125 to 147 (DDLGRGGNEESKKTGNAGPRPAC). Residue Arg-144 participates in substrate binding.

Homodimer. Cu cation serves as cofactor. Zn(2+) is required as a cofactor.

It is found in the cytoplasm. It carries out the reaction 2 superoxide + 2 H(+) = H2O2 + O2. Destroys radicals which are normally produced within the cells and which are toxic to biological systems. In Aspergillus niger, this protein is Superoxide dismutase [Cu-Zn].